The following is a 221-amino-acid chain: Octanoyltransferase (221 aa).

The region spanning 35-221 (ESYENRIIFC…RELLAALLSK (187 aa)) is the BPL/LPL catalytic domain. Substrate is bound by residues 80–87 (RGGDITYH), 152–154 (AIG), and 165–167 (GLA). The Acyl-thioester intermediate role is filled by C183.

Belongs to the LipB family.

The protein localises to the cytoplasm. The enzyme catalyses octanoyl-[ACP] + L-lysyl-[protein] = N(6)-octanoyl-L-lysyl-[protein] + holo-[ACP] + H(+). The protein operates within protein modification; protein lipoylation via endogenous pathway; protein N(6)-(lipoyl)lysine from octanoyl-[acyl-carrier-protein]: step 1/2. Catalyzes the transfer of endogenously produced octanoic acid from octanoyl-acyl-carrier-protein onto the lipoyl domains of lipoate-dependent enzymes. Lipoyl-ACP can also act as a substrate although octanoyl-ACP is likely to be the physiological substrate. This is Octanoyltransferase from Bacteroides fragilis (strain YCH46).